A 489-amino-acid polypeptide reads, in one-letter code: CUGBP Elav-like family member 1-A (489 aa).

3 consecutive RRM domains span residues 16 to 99 (IKMF…PADS), 108 to 188 (RKLF…FADT), and 404 to 482 (ANLF…LKRS). The necessary for oligomerization and EDEN-dependent deadenylation stretch occupies residues 183-210 (VKFADTQKDKEQKRMTQQLQQQMQQLNA).

It belongs to the CELF/BRUNOL family. As to quaternary structure, oligomer. Oligomerization is required for RNA-binding and EDEN-dependent deadenylation. Post-translationally, phosphorylated during oocyte maturation and dephosphorylated following egg activation. Dephosphorylation is calcium dependent and correlates with the increase in the activity of EDEN-dependent deadenylation.

It is found in the nucleus. Its subcellular location is the cytoplasm. In terms of biological role, RNA-binding protein implicated in the regulation of several post-transcriptional events. May be involved in pre-mRNA alternative splicing, mRNA translation activation and stability. Mediates the rapid and sequence-specific cytoplasmic deadenylation of EDEN-containing maternal mRNAs following fertilization. Binds to AU-rich sequences (AREs) of jun mRNA. Binds to the embryonic deadenylation element (EDEN) motif localized in the 3'-UTR of maternal mRNAs. Binds to RNA containing several repeats of the consensus sequence 5'-UGU-3'. EDEN-dependent deadenylation is enhanced by the presence of an additional cis element composed of three AUU repeats. This Xenopus laevis (African clawed frog) protein is CUGBP Elav-like family member 1-A (cugbp1-a).